Reading from the N-terminus, the 144-residue chain is 3-dehydroquinate dehydratase (144 aa).

Y22 functions as the Proton acceptor in the catalytic mechanism. Residues N73, H79, and D86 each coordinate substrate. Residue H99 is the Proton donor of the active site. Substrate-binding positions include 100–101 (LS) and R110.

This sequence belongs to the type-II 3-dehydroquinase family. In terms of assembly, homododecamer.

It catalyses the reaction 3-dehydroquinate = 3-dehydroshikimate + H2O. It participates in metabolic intermediate biosynthesis; chorismate biosynthesis; chorismate from D-erythrose 4-phosphate and phosphoenolpyruvate: step 3/7. Its function is as follows. Catalyzes a trans-dehydration via an enolate intermediate. This chain is 3-dehydroquinate dehydratase, found in Herpetosiphon aurantiacus (strain ATCC 23779 / DSM 785 / 114-95).